A 681-amino-acid polypeptide reads, in one-letter code: DNA ligase (681 aa).

Residues 33-37 (DGQFD), 83-84 (SL), and E113 contribute to the NAD(+) site. Catalysis depends on K115, which acts as the N6-AMP-lysine intermediate. The NAD(+) site is built by R136, E176, K292, and K316. Residues C410, C413, C429, and C435 each contribute to the Zn(2+) site. One can recognise a BRCT domain in the interval 599 to 681 (SIPRNLEGLS…RALLADGPPA (83 aa)).

The protein belongs to the NAD-dependent DNA ligase family. LigA subfamily. Mg(2+) is required as a cofactor. It depends on Mn(2+) as a cofactor.

It catalyses the reaction NAD(+) + (deoxyribonucleotide)n-3'-hydroxyl + 5'-phospho-(deoxyribonucleotide)m = (deoxyribonucleotide)n+m + AMP + beta-nicotinamide D-nucleotide.. In terms of biological role, DNA ligase that catalyzes the formation of phosphodiester linkages between 5'-phosphoryl and 3'-hydroxyl groups in double-stranded DNA using NAD as a coenzyme and as the energy source for the reaction. It is essential for DNA replication and repair of damaged DNA. In Mycobacteroides abscessus (strain ATCC 19977 / DSM 44196 / CCUG 20993 / CIP 104536 / JCM 13569 / NCTC 13031 / TMC 1543 / L948) (Mycobacterium abscessus), this protein is DNA ligase.